Reading from the N-terminus, the 253-residue chain is uncharacterized protein (253 aa).

This sequence belongs to the MG439/MG440 family.

This is an uncharacterized protein from Mycoplasma pneumoniae (strain ATCC 29342 / M129 / Subtype 1) (Mycoplasmoides pneumoniae).